Here is a 430-residue protein sequence, read N- to C-terminus: MEKIIVRGGKQLNGSVKMEGAKNAVLPVIAATLLASKGTSVLKNVPNLSDVFTINEVLKYLNADVSFVNDEVTVNATGEITSDAPFEYVRKMRASIVVMGPLLARTGSARVALPGGCAIGSRPVDLHLKGFEAMGAIVKIENGYIEATAEKLVGAKVYLDFPSVGATQNIMMAATLAEGTTVIENVAREPEIVDLANFLNQMGARVIGAGTEVIRIEGVKELTATEHSIIPDRIEAGTFMIAAAITGGNVLIEDAVPEHISSLIAKLEEMGVQIIEEENGIRVIGPDKLKAVDVKTMPHPGFPTDMQSQMMVIQMLSEGTSIMTETVFENRFMHVEEMRRMNADMKIEGHSVIISGPAKLQGAEVAATDLRAAAALILAGLVADGYTQVTELKYLDRGYNNFHGKLQALGADVERVDDSKIDVTNLASLF.

A phosphoenolpyruvate-binding site is contributed by 22-23 (KN). Residue arginine 93 participates in UDP-N-acetyl-alpha-D-glucosamine binding. Catalysis depends on cysteine 117, which acts as the Proton donor. Cysteine 117 carries the 2-(S-cysteinyl)pyruvic acid O-phosphothioketal modification. UDP-N-acetyl-alpha-D-glucosamine-binding positions include 122 to 126 (RPVDL), aspartate 305, and valine 327.

It belongs to the EPSP synthase family. MurA subfamily.

Its subcellular location is the cytoplasm. It catalyses the reaction phosphoenolpyruvate + UDP-N-acetyl-alpha-D-glucosamine = UDP-N-acetyl-3-O-(1-carboxyvinyl)-alpha-D-glucosamine + phosphate. The protein operates within cell wall biogenesis; peptidoglycan biosynthesis. Its function is as follows. Cell wall formation. Adds enolpyruvyl to UDP-N-acetylglucosamine. The sequence is that of UDP-N-acetylglucosamine 1-carboxyvinyltransferase 1 from Listeria monocytogenes serotype 4b (strain F2365).